The following is a 289-amino-acid chain: ATP synthase gamma chain (289 aa).

It belongs to the ATPase gamma chain family. F-type ATPases have 2 components, CF(1) - the catalytic core - and CF(0) - the membrane proton channel. CF(1) has five subunits: alpha(3), beta(3), gamma(1), delta(1), epsilon(1). CF(0) has three main subunits: a, b and c.

Its subcellular location is the cell membrane. Functionally, produces ATP from ADP in the presence of a proton gradient across the membrane. The gamma chain is believed to be important in regulating ATPase activity and the flow of protons through the CF(0) complex. This chain is ATP synthase gamma chain, found in Hamiltonella defensa subsp. Acyrthosiphon pisum (strain 5AT).